A 572-amino-acid chain; its full sequence is Proline--tRNA ligase (572 aa).

The protein belongs to the class-II aminoacyl-tRNA synthetase family. ProS type 1 subfamily. In terms of assembly, homodimer.

It localises to the cytoplasm. The enzyme catalyses tRNA(Pro) + L-proline + ATP = L-prolyl-tRNA(Pro) + AMP + diphosphate. In terms of biological role, catalyzes the attachment of proline to tRNA(Pro) in a two-step reaction: proline is first activated by ATP to form Pro-AMP and then transferred to the acceptor end of tRNA(Pro). As ProRS can inadvertently accommodate and process non-cognate amino acids such as alanine and cysteine, to avoid such errors it has two additional distinct editing activities against alanine. One activity is designated as 'pretransfer' editing and involves the tRNA(Pro)-independent hydrolysis of activated Ala-AMP. The other activity is designated 'posttransfer' editing and involves deacylation of mischarged Ala-tRNA(Pro). The misacylated Cys-tRNA(Pro) is not edited by ProRS. The chain is Proline--tRNA ligase from Buchnera aphidicola subsp. Acyrthosiphon pisum (strain 5A).